We begin with the raw amino-acid sequence, 257 residues long: Probable pectate lyase G (257 aa).

The N-terminal stretch at 1–24 (MPVLSKLLPTLTLTLPLLAGPCLA) is a signal peptide.

Belongs to the polysaccharide lyase 3 family. Requires Ca(2+) as cofactor.

The protein localises to the secreted. The catalysed reaction is Eliminative cleavage of (1-&gt;4)-alpha-D-galacturonan to give oligosaccharides with 4-deoxy-alpha-D-galact-4-enuronosyl groups at their non-reducing ends.. Functionally, pectinolytic enzyme consist of four classes of enzymes: pectin lyase, polygalacturonase, pectin methylesterase and rhamnogalacturonase. Among pectinolytic enzymes, pectin lyase is the most important in depolymerization of pectin, since it cleaves internal glycosidic bonds of highly methylated pectins. Favors pectate, the anion, over pectin, the methyl ester. This chain is Probable pectate lyase G (plyG), found in Emericella nidulans (strain FGSC A4 / ATCC 38163 / CBS 112.46 / NRRL 194 / M139) (Aspergillus nidulans).